Here is a 266-residue protein sequence, read N- to C-terminus: Cell division cycle-associated protein 3 (266 aa).

A disordered region spans residues 1–84 (MGSTQSVSGT…TPMKISGPDP (84 aa)). A phosphoserine mark is found at S29 and S31. The span at 32-46 (AGIQRTPIQVESSPQ) shows a compositional bias: polar residues. T37 carries the post-translational modification Phosphothreonine. Phosphoserine occurs at positions 44 and 67. The residue at position 75 (T75) is a Phosphothreonine. An F-box-like region spans residues 90-119 (KELSEVLETEASESISSPELALPRETPLFY). Residue S93 is modified to Phosphoserine. Disordered stretches follow at residues 120 to 225 (DLDL…LSEN) and 242 to 266 (KAGG…LLES). Residues 143 to 156 (LDPKQVFTKEEAKQ) show a composition bias toward basic and acidic residues. Positions 157–168 (SAETIAASQNSD) are enriched in polar residues. A Phosphoserine modification is found at S197. T200 is modified (phosphothreonine). Positions 203 to 213 (QDDNSPGTLTL) are enriched in polar residues. S207 bears the Phosphoserine mark. T210 is modified (phosphothreonine). Residues 250 to 259 (PNQDHDKENQ) show a composition bias toward basic and acidic residues. The KEN box signature appears at 256–258 (KEN).

As to quaternary structure, interacts with SKP1. Part of a SCF (SKP1-cullin-F-box) protein ligase complex. Post-translationally, ubiquitinated and degraded by the APC/C-Cdh1 complex.

It localises to the cytoplasm. The protein localises to the cytosol. It functions in the pathway protein modification; protein ubiquitination. F-box-like protein which is required for entry into mitosis. Acts by participating in E3 ligase complexes that mediate the ubiquitination and degradation of WEE1 kinase at G2/M phase. The polypeptide is Cell division cycle-associated protein 3 (Cdca3) (Mus musculus (Mouse)).